The sequence spans 982 residues: Protein phosphatase 1 regulatory subunit 12B (982 aa).

The span at 1-24 (MAELEHLGGKRAESARMRRAEQLR) shows a compositional bias: basic and acidic residues. Residues 1–50 (MAELEHLGGKRAESARMRRAEQLRRWRGSLTEQEPAERRGAGRQPLTRRG) are disordered. Phosphoserine is present on serine 29. 5 ANK repeats span residues 57–86 (EDGA…DINT), 90–119 (DGLT…NVNQ), 123–152 (EGWT…SVGI), 216–245 (SGAT…ELNV), and 249–278 (DGWT…DMDI). Disordered stretches follow at residues 342-517 (EETP…RESA), 556-579 (RTPH…SSTP), 606-864 (TDSS…EARE), and 918-948 (AQQK…KMSE). Residues 362-374 (SEEEEGEDEASES) show a composition bias toward acidic residues. A compositionally biased stretch (basic and acidic residues) spans 375–385 (ETEKEADKKPE). Positions 389-401 (NHSNSESKSSITE) are enriched in polar residues. Residues 411-421 (FSASSARRFSS) are compositionally biased toward low complexity. Phosphothreonine is present on threonine 445. Positions 466-478 (SSIYRSSSSPRIS) are enriched in low complexity. A compositionally biased stretch (basic and acidic residues) spans 482-491 (DNKDKERENK). The span at 623–632 (VRDEEAESLR) shows a compositional bias: basic and acidic residues. Basic residues predominate over residues 633 to 643 (KARSRQARQTR). Threonine 646 is modified (phosphothreonine). Residues 656 to 680 (EAERTFSRSRAERQAQEQPREKPTD) are compositionally biased toward basic and acidic residues. The segment covering 731–742 (TTPASPSTSRPS) has biased composition (low complexity). Over residues 743-755 (LYTSSHLLWTNRF) the composition is skewed to polar residues. The span at 797 to 807 (ERRRPKERRRG) shows a compositional bias: basic residues. Phosphothreonine is present on threonine 808. Residues 824–836 (EEVKETWHERLSR) are compositionally biased toward basic and acidic residues. Serine 839 bears the Phosphoserine mark. A compositionally biased stretch (polar residues) spans 840 to 849 (GGSNPTTSDS). 3 stretches are compositionally biased toward basic and acidic residues: residues 850 to 864 (YGDR…EARE), 918 to 927 (AQQKQEKTSD), and 933 to 948 (EMEK…KMSE). Serine 947 bears the Phosphoserine mark.

In terms of assembly, PP1 comprises a catalytic subunit, PPP1CA, PPP1CB or PPP1CC, and one or several targeting or regulatory subunits. PPP1R12B mediates binding to myosin. Isoform 3 and isoform 4 bind PPP1R12A, but not isoform 1 of PPP1R12B itself. Binds IL16. In terms of tissue distribution, detected in skeletal muscle, fetal and adult heart, brain, placenta, kidney, spleen, thymus, pancreas and lung. Isoform 3 and isoform 4 are heart specific.

Its subcellular location is the cytoplasm. The protein localises to the cytoskeleton. It localises to the stress fiber. In terms of biological role, regulates myosin phosphatase activity. Augments Ca(2+) sensitivity of the contractile apparatus. In Homo sapiens (Human), this protein is Protein phosphatase 1 regulatory subunit 12B (PPP1R12B).